The following is a 206-amino-acid chain: Ribosomal RNA small subunit methyltransferase G (206 aa).

Residues G71, F76, 122–123 (AE), and R135 each bind S-adenosyl-L-methionine.

It belongs to the methyltransferase superfamily. RNA methyltransferase RsmG family.

It localises to the cytoplasm. Functionally, specifically methylates the N7 position of a guanine in 16S rRNA. This is Ribosomal RNA small subunit methyltransferase G from Bacteroides fragilis (strain ATCC 25285 / DSM 2151 / CCUG 4856 / JCM 11019 / LMG 10263 / NCTC 9343 / Onslow / VPI 2553 / EN-2).